The sequence spans 99 residues: Signal recognition particle 19 kDa protein (99 aa).

The protein belongs to the SRP19 family. In terms of assembly, part of the signal recognition particle protein translocation system, which is composed of SRP and FtsY. Archaeal SRP consists of a 7S RNA molecule of 300 nucleotides and two protein subunits: SRP54 and SRP19.

Its subcellular location is the cytoplasm. Functionally, involved in targeting and insertion of nascent membrane proteins into the cytoplasmic membrane. Binds directly to 7S RNA and mediates binding of the 54 kDa subunit of the SRP. The chain is Signal recognition particle 19 kDa protein from Pyrococcus abyssi (strain GE5 / Orsay).